Consider the following 207-residue polypeptide: Putative transcriptional regulator (207 aa).

One can recognise a Response regulatory domain in the interval 3–118 (KVLIVDDHPA…ELLLAAKAVL (116 aa)). Residues Asp-9 and Asp-53 each carry the 4-aspartylphosphate modification. The HTH luxR-type domain maps to 140–205 (EARMLESLSD…GLIDFARRHE (66 aa)). The segment at residues 155-174 (LQYLANGNTNKAIAQQLFLS) is a DNA-binding region (H-T-H motif).

In terms of biological role, probable transcriptional regulator. This Pseudomonas aeruginosa (strain ATCC 15692 / DSM 22644 / CIP 104116 / JCM 14847 / LMG 12228 / 1C / PRS 101 / PAO1) protein is Putative transcriptional regulator.